A 646-amino-acid polypeptide reads, in one-letter code: Wee1-like protein kinase (646 aa).

The disordered stretch occupies residues 1-181 (MSFLSRQQPP…GTPPHKTFRK (181 aa)). The span at 32 to 43 (DCEEEEEEEEEE) shows a compositional bias: acidic residues. Ser53 carries the phosphoserine; by PLK1 modification. Ser78 and Ser85 each carry phosphoserine. A compositionally biased stretch (low complexity) spans 94–103 (LLPGACPGAD). Ser123 is modified (phosphoserine; by CDK1). 5 positions are modified to phosphoserine: Ser127, Ser137, Ser139, Ser150, and Ser165. The span at 158-170 (RAGEGRRSPRPDH) shows a compositional bias: basic and acidic residues. Phosphothreonine is present on residues Thr187, Thr190, and Thr239. Residues Ser270, Ser307, and Ser312 each carry the phosphoserine modification. The Protein kinase domain occupies 299 to 569 (FHELEKIGSG…AMALVKHSVL (271 aa)). ATP is bound by residues 305–313 (IGSGEFGSV) and Lys328. Asn342 serves as a coordination point for Mg(2+). Catalysis depends on Asp426, which acts as the Proton acceptor. 3 residues coordinate Mg(2+): Asn431, Asp463, and Gly465. Phosphoserine; by BRSK1 and BRSK2 is present on Ser642.

This sequence belongs to the protein kinase superfamily. Ser/Thr protein kinase family. WEE1 subfamily. The cofactor is Mg(2+). In terms of processing, phosphorylated during M and G1 phases. Also autophosphorylated. Phosphorylation at Ser-642 by BRSK1 and BRSK2 in post-mitotic neurons, leads to down-regulate WEE1 activity in polarized neurons. Phosphorylated at Ser-53 and Ser-123 by PLK1 and CDK1, respectively, generating an signal for degradation that can be recognized by the SCF(BTRC) complex, leading to its ubiquitination and degradation at the onset of G2/M phase. Dephosphorylated at Thr-239 by CTDP1. Dephosphorylated at Ser-53 and Ser-123 by the serine/threonine-protein phosphatase 2A preventing its ubiquitin-mediated degradation. Post-translationally, ubiquitinated and degraded at the onset of G2/M phase.

Its subcellular location is the nucleus. The enzyme catalyses L-tyrosyl-[protein] + ATP = O-phospho-L-tyrosyl-[protein] + ADP + H(+). Synthesis is increased during S and G2 phases, presumably by an increase in transcription; activity is decreased by phosphorylation during M phase. Protein levels fall in M phase as a result of decreased synthesis combined with degradation. Activity seems to be negatively regulated by phosphorylation upon entry into mitosis, although N-terminal phosphorylation might also regulate the protein stability via protection from proteolysis or might regulate the subcellular location. Acts as a negative regulator of entry into mitosis (G2 to M transition) by protecting the nucleus from cytoplasmically activated cyclin B1-complexed CDK1 before the onset of mitosis by mediating phosphorylation of CDK1 on 'Tyr-15'. Specifically phosphorylates and inactivates cyclin B1-complexed CDK1 reaching a maximum during G2 phase and a minimum as cells enter M phase. Phosphorylation of cyclin B1-CDK1 occurs exclusively on 'Tyr-15' and phosphorylation of monomeric CDK1 does not occur. Its activity increases during S and G2 phases and decreases at M phase when it is hyperphosphorylated. A correlated decrease in protein level occurs at M/G1 phase, probably due to its degradation. The sequence is that of Wee1-like protein kinase from Homo sapiens (Human).